A 379-amino-acid polypeptide reads, in one-letter code: Protein trichome birefringence-like 36 (379 aa).

A helical; Signal-anchor for type II membrane protein transmembrane segment spans residues 8 to 24 (VLFLSLCLILGKVVLSQ). Residues 123 to 125 (GDS) carry the GDS motif motif. Positions 353 to 367 (DCSHWCLPGVPDIWN) match the DCXHWCLPGXXDXWN motif motif.

This sequence belongs to the PC-esterase family. TBL subfamily.

Its subcellular location is the membrane. Functionally, may act as a bridging protein that binds pectin and other cell wall polysaccharides. Probably involved in maintaining esterification of pectins. May be involved in the specific O-acetylation of cell wall polymers. This chain is Protein trichome birefringence-like 36 (TBL36), found in Arabidopsis thaliana (Mouse-ear cress).